A 412-amino-acid chain; its full sequence is Docking protein 2 (412 aa).

A PH domain is found at 4–114 (GAVKQGFLYL…WVQAICLLAF (111 aa)). One can recognise an IRS-type PTB domain in the interval 147 to 252 (PHKEFAVTMR…SAQKNAAPAT (106 aa)). Residues 246 to 296 (KNAAPATPQPQPATIPASLPRPDSPYSRPHDSLPPPSPTTPVPAPRPRGQE) are disordered. Tyr271 is modified (phosphotyrosine). A compositionally biased stretch (pro residues) spans 277–291 (SLPPPSPTTPVPAPR). Tyr299 and Tyr345 each carry phosphotyrosine. Residues 359 to 412 (SPQEPRGEAWRRQATADRDPAGLQHVQPAGQDFSASGWQPGTEYDNVVLKKGPK) are disordered. Residues 361 to 378 (QEPRGEAWRRQATADRDP) are compositionally biased toward basic and acidic residues.

This sequence belongs to the DOK family. Type A subfamily. As to quaternary structure, interacts with phosphorylated RASGAP and EGFR. Interacts with RET and NCK. Interacts (via PH domain) with TEK/TIE2 (tyrosine phosphorylated). (Microbial infection) Interacts with Herpes simplex virus 1 (HHV-1) protein UL46; this interaction induces DOK2 phosphorylation and subsequent degradation. On immunoreceptor stimulation, phosphorylated on C-terminal tyrosine residues. Phosphorylation on Tyr-345 is required for binding to the SH2 domain of NCK. Phosphorylation on both Tyr-271 and Tyr-299 is required for interaction with RASGAP. Phosphorylated on tyrosine residues by TEK/TIE2. As to expression, highly expressed in peripheral blood leukocytes, lymph nodes and spleen. Lower expression in thymus, bone marrow and fetal liver.

Its function is as follows. DOK proteins are enzymatically inert adaptor or scaffolding proteins. They provide a docking platform for the assembly of multimolecular signaling complexes. DOK2 may modulate the cellular proliferation induced by IL-4, as well as IL-2 and IL-3. May be involved in modulating Bcr-Abl signaling. Attenuates EGF-stimulated MAP kinase activation. This chain is Docking protein 2 (DOK2), found in Homo sapiens (Human).